Consider the following 956-residue polypeptide: Glutamate receptor ionotropic, kainate 4 (956 aa).

Positions 1–20 are cleaved as a signal peptide; the sequence is MPRVSAPLVLLPAWLVMVAC. At 21-545 the chain is on the extracellular side; that stretch reads SPHSLRIAAI…YFSFLDPFSP (525 aa). 8 N-linked (GlcNAc...) asparagine glycosylation sites follow: Asn-158, Asn-220, Asn-272, Asn-286, Asn-323, Asn-408, Asn-415, and Asn-479. L-glutamate contacts are provided by Gly-500, Thr-502, and Arg-507. The chain crosses the membrane as a helical span at residues 546 to 566; the sequence is GVWLFMLLAYLAVSCVLFLVA. The Cytoplasmic segment spans residues 567-623; it reads RLTPYEWYSPHPCAQGRCNLLVNQYSLGNSLWFPVGGFMQQGSTIAPRALSTRCVSG. The chain crosses the membrane as a helical span at residues 624–644; that stretch reads VWWAFTLIIISSYTANLAAFL. At 645 to 804 the chain is on the extracellular side; the sequence is TVQRMDVPIE…HRAKGLGMEN (160 aa). Ser-674, Ser-675, and Glu-723 together coordinate L-glutamate. Asn-736 carries N-linked (GlcNAc...) asparagine glycosylation. A helical membrane pass occupies residues 805 to 825; it reads IGGIFVVLICGLIVAIFMAML. The Cytoplasmic segment spans residues 826-956; it reads EFLWTLRHSE…EKTTNSSEPE (131 aa). 2 disordered regions span residues 863-889 and 931-956; these read RRRA…TLSN and LRAR…SEPE. The segment covering 939-948 has biased composition (basic and acidic residues); it reads RSEESLEWEK.

This sequence belongs to the glutamate-gated ion channel (TC 1.A.10.1) family. GRIK4 subfamily. Homodimer. Can form functional heteromeric receptors with GRIK1, GRIK2 and GRIK3.

The protein localises to the cell membrane. It localises to the postsynaptic cell membrane. The protein resides in the presynaptic cell membrane. Functionally, ionotropic glutamate receptor that functions as a cation-permeable ligand-gated ion channel. Cannot form functional channels on its own. Shows channel activity only in heteromeric assembly with GRIK1, GRIK2 and GRIK3 subunits. The protein is Glutamate receptor ionotropic, kainate 4 (GRIK4) of Homo sapiens (Human).